The primary structure comprises 447 residues: MITIKKGLDLPIAGKPAQVIHSGNAVNQVAILGEEYVGMRPSMKVREGDVVKKGQVLFEDKKNPGVIFTAPASGTITAINRGEKRVLQSVVINVEGDEKITFAKYSTEQLNTLSSEQVKQNLIESGLWTALRTRPFSKVPSIESEASSIFVNAMDTNPLAADPSVVLKEYSQDFTNGLTVLSRLFPSKPLHLCKAGDSNIPTTDLENLQIHDFTGVHPAGLVGTHIHFIDPVGIQKTVWHINYQDVIAVGKLFTTGELYSERVISLAGPQVKQPRLVRTIIGANLSQLTQNELSAGKNRVISGSVLCGQIAKDSHDYLGRYALQVSVIAEGNEKEFFGWIMPQANKYSVTRTVLGHFSKKLFNFTTSENGGERAMVPIGSYERVMPLDILPTLLLRDLIVGDTDGAQELGCLELDEEDLALCSFVCPGKYEYGSILRQVLDKIEKEG.

It belongs to the NqrA family. As to quaternary structure, composed of six subunits; NqrA, NqrB, NqrC, NqrD, NqrE and NqrF.

The enzyme catalyses a ubiquinone + n Na(+)(in) + NADH + H(+) = a ubiquinol + n Na(+)(out) + NAD(+). Functionally, NQR complex catalyzes the reduction of ubiquinone-1 to ubiquinol by two successive reactions, coupled with the transport of Na(+) ions from the cytoplasm to the periplasm. NqrA to NqrE are probably involved in the second step, the conversion of ubisemiquinone to ubiquinol. This is Na(+)-translocating NADH-quinone reductase subunit A from Haemophilus influenzae (strain PittGG).